Reading from the N-terminus, the 330-residue chain is Tetraacyldisaccharide 4'-kinase (330 aa).

58-65 (TVGGSGKT) is a binding site for ATP.

It belongs to the LpxK family.

The catalysed reaction is a lipid A disaccharide + ATP = a lipid IVA + ADP + H(+). Its pathway is glycolipid biosynthesis; lipid IV(A) biosynthesis; lipid IV(A) from (3R)-3-hydroxytetradecanoyl-[acyl-carrier-protein] and UDP-N-acetyl-alpha-D-glucosamine: step 6/6. Its function is as follows. Transfers the gamma-phosphate of ATP to the 4'-position of a tetraacyldisaccharide 1-phosphate intermediate (termed DS-1-P) to form tetraacyldisaccharide 1,4'-bis-phosphate (lipid IVA). In Shewanella pealeana (strain ATCC 700345 / ANG-SQ1), this protein is Tetraacyldisaccharide 4'-kinase.